The chain runs to 347 residues: DNA-directed RNA polymerase subunit alpha (347 aa).

Residues 1–243 (MLFREGTRLI…DQISVFINFD (243 aa)) are alpha N-terminal domain (alpha-NTD). An alpha C-terminal domain (alpha-CTD) region spans residues 255–347 (SGSSDLNDNL…EWKRKQHHEA (93 aa)).

It belongs to the RNA polymerase alpha chain family. As to quaternary structure, homodimer. The RNAP catalytic core consists of 2 alpha, 1 beta, 1 beta' and 1 omega subunit. When a sigma factor is associated with the core the holoenzyme is formed, which can initiate transcription.

It carries out the reaction RNA(n) + a ribonucleoside 5'-triphosphate = RNA(n+1) + diphosphate. DNA-dependent RNA polymerase catalyzes the transcription of DNA into RNA using the four ribonucleoside triphosphates as substrates. The protein is DNA-directed RNA polymerase subunit alpha of Lawsonia intracellularis (strain PHE/MN1-00).